A 341-amino-acid polypeptide reads, in one-letter code: 4-(gamma-L-glutamylamino)butanoyl-[BtrI acyl-carrier protein] monooxygenase BtrO (341 aa).

The protein belongs to the bacterial luciferase oxidoreductase family.

It catalyses the reaction 4-(gamma-L-glutamylamino)butanoyl-[BtrI ACP] + FMNH2 + O2 = 4-(gamma-L-glutamylamino)-(2S)-2-hydroxybutanoyl-[BtrI ACP] + FMN + H2O + H(+). Its pathway is antibiotic biosynthesis; butirosin biosynthesis. Functionally, monooxygenase component of a two-component system involved in the biosynthesis of the side chain of the aminoglycoside antibiotics in the biosynthetic pathway of butirosin. Together with BtrV, mediates hydroxylation of gamma-L-Glu-GABA-S-BtrI. Not able to hydroxylate free substrates, activation by the acyl-carrier protein is mandatory. Octanoyl-S-[BtrI acyl-carrier protein] is also accepted as substrate. The sequence is that of 4-(gamma-L-glutamylamino)butanoyl-[BtrI acyl-carrier protein] monooxygenase BtrO (btrO) from Niallia circulans (Bacillus circulans).